A 184-amino-acid polypeptide reads, in one-letter code: UPF0149 protein PA14_69010 (184 aa).

It belongs to the UPF0149 family.

The polypeptide is UPF0149 protein PA14_69010 (Pseudomonas aeruginosa (strain UCBPP-PA14)).